Reading from the N-terminus, the 223-residue chain is MSVQAEIGILDHVDGSSEFVSQDTKVICSVTGPIEPKARQELPTQLALEIIVRPAKGVATTREKVLEDKLRAVLTPLITRHCYPRQLCQITCQILESGEDEAEFSLRELSCCINAAFLALVDAGIALNSMCASIPIAIIKDTSDIIVDPTAEQLKISLSVHTLALEFVNGGKVVKNVLLLDSNGDFNEDQLFSLLELGEQKCQELVTNIRRIIQDNISPRLVV.

The protein belongs to the RNase PH family. In terms of assembly, component of the RNA exosome complex. Specifically part of the catalytically inactive RNA exosome core complex (Exo-9) which may associate with the catalytic subunits RRP6 and DIS3 in cytoplasmic- and nuclear-specific RNA exosome complex forms. Exo-9 is formed by a hexameric base ring of RNase PH domain-containing subunits and a cap ring consisting of CSL4, RRP4 and RRP40.

The protein resides in the cytoplasm. It is found in the nucleus. The protein localises to the nucleolus. Its function is as follows. Non-catalytic component of the RNA exosome complex which has 3'-&gt;5' exoribonuclease activity and participates in a multitude of cellular RNA processing and degradation events. In the nucleus, the RNA exosome complex is involved in proper maturation of stable RNA species such as rRNA, snRNA and snoRNA, in the elimination of RNA processing by-products and non-coding 'pervasive' transcripts, such as antisense RNA species and cryptic unstable transcripts (CUTs), and of mRNAs with processing defects, thereby limiting or excluding their export to the cytoplasm. In the cytoplasm, the RNA exosome complex is involved in general mRNA turnover and in RNA surveillance pathways, preventing translation of aberrant mRNAs. The catalytic inactive RNA exosome core complex of 9 subunits (Exo-9) is proposed to play a pivotal role in the binding and presentation of RNA for ribonucleolysis, and to serve as a scaffold for the association with catalytic subunits and accessory proteins or complexes. RRP46 is part of the hexameric ring of RNase PH domain-containing subunits proposed to form a central channel which threads RNA substrates for degradation. The polypeptide is Exosome complex component RRP46 (RRP46) (Saccharomyces cerevisiae (strain ATCC 204508 / S288c) (Baker's yeast)).